Consider the following 1793-residue polypeptide: Protein TIC 214 (1793 aa).

6 helical membrane-spanning segments follow: residues 11–31, 64–84, 90–112, 129–149, 172–192, and 222–242; these read LVSL…YYGF, FITG…HIAL, ITVI…NFLN, IFFQ…SSIL, VGWL…LVWI, and IFLI…PPIY. The segment at 1504–1524 is disordered; that stretch reads DIEEDYGESDSKKGGKDKNKK.

The protein belongs to the TIC214 family. Part of the Tic complex.

Its subcellular location is the plastid. It is found in the chloroplast inner membrane. Functionally, involved in protein precursor import into chloroplasts. May be part of an intermediate translocation complex acting as a protein-conducting channel at the inner envelope. In Lotus japonicus (Lotus corniculatus var. japonicus), this protein is Protein TIC 214.